The sequence spans 206 residues: Methyltransferase-like 26 (206 aa).

It belongs to the UPF0585 family.

The polypeptide is Methyltransferase-like 26 (Danio rerio (Zebrafish)).